Reading from the N-terminus, the 374-residue chain is Ribosomal RNA large subunit methyltransferase M (374 aa).

Residues S188, 221–224, D240, D260, and D276 each bind S-adenosyl-L-methionine; that span reads CPGG. K305 acts as the Proton acceptor in catalysis.

Belongs to the class I-like SAM-binding methyltransferase superfamily. RNA methyltransferase RlmE family. RlmM subfamily. Monomer.

Its subcellular location is the cytoplasm. The catalysed reaction is cytidine(2498) in 23S rRNA + S-adenosyl-L-methionine = 2'-O-methylcytidine(2498) in 23S rRNA + S-adenosyl-L-homocysteine + H(+). In terms of biological role, catalyzes the 2'-O-methylation at nucleotide C2498 in 23S rRNA. The chain is Ribosomal RNA large subunit methyltransferase M from Edwardsiella ictaluri (strain 93-146).